The chain runs to 86 residues: Toxin Tpa5 (86 aa).

The N-terminal stretch at 1–20 (MSIFPIALALLLIGLEEGEA) is a signal peptide. One can recognise an LCN-type CS-alpha/beta domain in the interval 22 to 85 (RDGYPISKNN…WGDPGTPPCM (64 aa)). 4 cysteine pairs are disulfide-bonded: cysteine 33-cysteine 84, cysteine 37-cysteine 58, cysteine 43-cysteine 64, and cysteine 47-cysteine 66.

Belongs to the long (4 C-C) scorpion toxin superfamily. Sodium channel inhibitor family. Beta subfamily. In terms of tissue distribution, expressed by the venom gland.

It localises to the secreted. Functionally, beta toxins bind voltage-independently at site-4 of sodium channels (Nav) and shift the voltage of activation toward more negative potentials thereby affecting sodium channel activation and promoting spontaneous and repetitive firing. The polypeptide is Toxin Tpa5 (Tityus pachyurus (Colombian scorpion)).